Reading from the N-terminus, the 686-residue chain is Myb-related protein B (686 aa).

A disordered region spans residues 1-28 (MARRSRGEDQDELHCQDTDSDVPEQRDG). HTH myb-type domains follow at residues 26–77 (RDGR…LRVL), 78–133 (NPDL…NPEV), and 134–184 (KKSS…KRKV). 3 consecutive DNA-binding regions (H-T-H motif) follow at residues 54-77 (WKFLASHFPNRSDQQCQYRWLRVL), 106-129 (WTLIAKHLKGRLGKQCRERWHNHL), and 157-180 (WAEIAKLLPGRTDNAVKNHWNSTI). Disordered regions lie at residues 315–355 (CDLT…VTEY) and 493–512 (YVVDNTPHTPTPFKNALEKY). The span at 326–343 (PSAGSSSSSNSPVRQTPS) shows a compositional bias: low complexity.

In terms of assembly, component of the DREAM complex. In terms of tissue distribution, expressed in hematopoietic and non hematopoietic cells.

It is found in the nucleus. Its function is as follows. Represses v-myb- and c-myb-mediated activation of the mim-1 gene, probably by competing with other myb proteins for binding sites. It is an inhibitory member of the myb family. The polypeptide is Myb-related protein B (MYBL2) (Gallus gallus (Chicken)).